The chain runs to 90 residues: Acylphosphatase (90 aa).

An Acylphosphatase-like domain is found at 5–90 (SYLFNVKGKV…WQELTDFKMY (86 aa)). Residues arginine 20 and asparagine 38 contribute to the active site.

It belongs to the acylphosphatase family.

It carries out the reaction an acyl phosphate + H2O = a carboxylate + phosphate + H(+). The chain is Acylphosphatase (acyP) from Aliivibrio fischeri (strain ATCC 700601 / ES114) (Vibrio fischeri).